Here is a 132-residue protein sequence, read N- to C-terminus: Small ribosomal subunit protein uS9 (132 aa).

This sequence belongs to the universal ribosomal protein uS9 family.

The protein is Small ribosomal subunit protein uS9 of Methanothrix thermoacetophila (strain DSM 6194 / JCM 14653 / NBRC 101360 / PT) (Methanosaeta thermophila).